Here is a 277-residue protein sequence, read N- to C-terminus: Undecaprenyl-diphosphatase (277 aa).

Helical transmembrane passes span 19–39, 44–64, 89–109, 122–142, 154–174, 195–215, 224–244, and 257–277; these read FLPV…PFYG, FDDL…LFLY, FHFL…GFIA, LLEI…VAEW, IGFK…IPGM, AEFS…YKLI, NTIP…TLVI, and SVFG…TKLI.

It belongs to the UppP family.

Its subcellular location is the cell inner membrane. The catalysed reaction is di-trans,octa-cis-undecaprenyl diphosphate + H2O = di-trans,octa-cis-undecaprenyl phosphate + phosphate + H(+). Functionally, catalyzes the dephosphorylation of undecaprenyl diphosphate (UPP). Confers resistance to bacitracin. This Leptospira interrogans serogroup Icterohaemorrhagiae serovar copenhageni (strain Fiocruz L1-130) protein is Undecaprenyl-diphosphatase.